We begin with the raw amino-acid sequence, 196 residues long: Imidazoleglycerol-phosphate dehydratase (196 aa).

This sequence belongs to the imidazoleglycerol-phosphate dehydratase family.

It localises to the cytoplasm. The catalysed reaction is D-erythro-1-(imidazol-4-yl)glycerol 3-phosphate = 3-(imidazol-4-yl)-2-oxopropyl phosphate + H2O. Its pathway is amino-acid biosynthesis; L-histidine biosynthesis; L-histidine from 5-phospho-alpha-D-ribose 1-diphosphate: step 6/9. The protein is Imidazoleglycerol-phosphate dehydratase of Clostridium novyi (strain NT).